The sequence spans 95 residues: Aspartyl/glutamyl-tRNA(Asn/Gln) amidotransferase subunit C (95 aa).

It belongs to the GatC family. As to quaternary structure, heterotrimer of A, B and C subunits.

The catalysed reaction is L-glutamyl-tRNA(Gln) + L-glutamine + ATP + H2O = L-glutaminyl-tRNA(Gln) + L-glutamate + ADP + phosphate + H(+). It carries out the reaction L-aspartyl-tRNA(Asn) + L-glutamine + ATP + H2O = L-asparaginyl-tRNA(Asn) + L-glutamate + ADP + phosphate + 2 H(+). Allows the formation of correctly charged Asn-tRNA(Asn) or Gln-tRNA(Gln) through the transamidation of misacylated Asp-tRNA(Asn) or Glu-tRNA(Gln) in organisms which lack either or both of asparaginyl-tRNA or glutaminyl-tRNA synthetases. The reaction takes place in the presence of glutamine and ATP through an activated phospho-Asp-tRNA(Asn) or phospho-Glu-tRNA(Gln). This chain is Aspartyl/glutamyl-tRNA(Asn/Gln) amidotransferase subunit C, found in Rhodopseudomonas palustris (strain BisB5).